A 400-amino-acid polypeptide reads, in one-letter code: Forkhead box protein A4-B (400 aa).

Positions 119–213 (KPPYSYISLI…ENGCYLRRQK (95 aa)) form a DNA-binding region, fork-head. Basic and acidic residues predominate over residues 218–234 (ERSKSGEGERKGNKPGD). A disordered region spans residues 218–290 (ERSKSGEGER…VGFSPTSEQA (73 aa)). 2 stretches are compositionally biased toward polar residues: residues 249-258 (DCSSSRSPQA) and 267-277 (STGSSIHQATG).

Primarily expressed in the dorsal blastopore lip (Spemann organizer) of early gastrulae. At later stages, expressed in the dorsal mesoderm and the neural floor plate. In the dorsal mesoderm, expressed in the notochord but not in the presomitic mesoderm. Also expressed in the mid-brain area.

Its subcellular location is the nucleus. In terms of biological role, transcriptional repressor involved in embryonic nervous system development. Plays a role in the induction and patterning of the anterior-posterior neural axis. Involved in the establishment of floor plate differentiation from neural plate cells during gastrulation. Binds the anf1 promoter sequence to restrict expression of anf1 to the anterior of the neural plate, thereby patterning the forebrain. Can bind to the HNF-3-alpha DNA target sequence. Cooperates with t/bra in a dose-dependent manner to specify dorsal mesoderm formation, including notochord. May be involved in the dorso-ventral patterning of the mesoderm. Binds to DNA via the target sequence 5'-[GA]TAAA[TC]A-3', with 5'-GTAAATA-3' being the preferred binding site. The protein is Forkhead box protein A4-B (foxa4-b) of Xenopus laevis (African clawed frog).